The primary structure comprises 465 residues: Probable tRNA modification GTPase MnmE (465 aa).

(6S)-5-formyl-5,6,7,8-tetrahydrofolate is bound by residues Arg23, Glu85, and Arg124. One can recognise a TrmE-type G domain in the interval 221–384 (GTKVCIIGKP…LNNCILDLSS (164 aa)). GTP-binding positions include 231–236 (NVGKSS), 250–256 (TNFPGTT), and 275–278 (DTAG). Mg(2+) contacts are provided by Ser235 and Thr256. A (6S)-5-formyl-5,6,7,8-tetrahydrofolate-binding site is contributed by Lys465.

The protein belongs to the TRAFAC class TrmE-Era-EngA-EngB-Septin-like GTPase superfamily. TrmE GTPase family. K(+) serves as cofactor.

Its subcellular location is the plastid. The protein resides in the chloroplast. In terms of biological role, exhibits a very high intrinsic GTPase hydrolysis rate. Involved in the addition of a carboxymethylaminomethyl (cmnm) group at the wobble position (U34) of certain tRNAs, forming tRNA-cmnm(5)s(2)U34. This Cyanidium caldarium (Red alga) protein is Probable tRNA modification GTPase MnmE.